The sequence spans 372 residues: Cytochrome b (372 aa).

4 helical membrane passes run 25 to 45 (FGSMLLTCSALQTITGFFLAI), 69 to 90 (WIMQNLHAIGASMFFICIYIHI), 105 to 125 (WLSGTILLFILMATAFFGYVL), and 170 to 190 (FFALHFILPFTIISLSSIHIM). Heme b is bound by residues histidine 75 and histidine 89. Positions 174 and 188 each coordinate heme b. Histidine 193 is a binding site for a ubiquinone. A run of 4 helical transmembrane segments spans residues 218–238 (HKDILVLTIMLTTMFIIMTLT), 280–300 (LGGTVALVLSVAILLTTPFTH), 312–332 (LTQLMFWTLVATFITITWAAT), and 339–358 (FTMIGQMTSLLYFSFFIMNP).

This sequence belongs to the cytochrome b family. As to quaternary structure, the cytochrome bc1 complex contains 3 respiratory subunits (MT-CYB, CYC1 and UQCRFS1), 2 core proteins (UQCRC1 and UQCRC2) and probably 6 low-molecular weight proteins. Requires heme b as cofactor.

It localises to the mitochondrion inner membrane. Functionally, component of the ubiquinol-cytochrome c reductase complex (complex III or cytochrome b-c1 complex) that is part of the mitochondrial respiratory chain. The b-c1 complex mediates electron transfer from ubiquinol to cytochrome c. Contributes to the generation of a proton gradient across the mitochondrial membrane that is then used for ATP synthesis. The protein is Cytochrome b (MT-CYB) of Lycodon semicarinatus (Ryukyu odd-tooth snake).